We begin with the raw amino-acid sequence, 299 residues long: MQKVKAAIIGSGNIGTDLMYKLRKSEVIDLNAMIGIDVESDGLKRAKEAGYEVFDNGIQAIIDNPSLADIVFDATSAKAHRYHAKTLEELEKIVIDLTPAAYGPFVCPAIRNNNFLDKQNVNMITCGGQATIPIVHAINGVANVTYAEIVATISSLSAGPGTRANIDEFTITTKRGIEEVGGADKGKAIIILNPAEPPILMRDTIYCEVKDMDEVSIYEAIHKMVERVRTYVPGYSLKQEPMFDGNRVTVFLEVEGAGDYFPPYAGNLDIMTAAALKVGEEFATQIISEKKRGVMNEAK.

Residue 11-14 (SGNI) participates in NAD(+) binding. The active-site Acyl-thioester intermediate is the Cys126. Residues 157–165 (SAGPGTRAN) and Asn267 each bind NAD(+).

It belongs to the acetaldehyde dehydrogenase family.

The enzyme catalyses acetaldehyde + NAD(+) + CoA = acetyl-CoA + NADH + H(+). The polypeptide is Acetaldehyde dehydrogenase (Bacillus thuringiensis (strain Al Hakam)).